The following is a 443-amino-acid chain: Cobyrinate a,c-diamide synthase (443 aa).

The region spanning 244-435 is the GATase cobBQ-type domain; it reads KVSVAMDSAF…AHIHFLSNPR (192 aa). The Nucleophile role is filled by Cys-327.

Belongs to the CobB/CbiA family. Mg(2+) serves as cofactor.

It carries out the reaction cob(II)yrinate + 2 L-glutamine + 2 ATP + 2 H2O = cob(II)yrinate a,c diamide + 2 L-glutamate + 2 ADP + 2 phosphate + 2 H(+). It participates in cofactor biosynthesis; adenosylcobalamin biosynthesis; cob(II)yrinate a,c-diamide from sirohydrochlorin (anaerobic route): step 10/10. In terms of biological role, catalyzes the ATP-dependent amidation of the two carboxylate groups at positions a and c of cobyrinate, using either L-glutamine or ammonia as the nitrogen source. The chain is Cobyrinate a,c-diamide synthase from Thermoplasma acidophilum (strain ATCC 25905 / DSM 1728 / JCM 9062 / NBRC 15155 / AMRC-C165).